The sequence spans 162 residues: Cyclic pyranopterin monophosphate synthase (162 aa).

Substrate-binding positions include 75–77 (LCH) and 113–114 (ME). Asp128 is an active-site residue.

The protein belongs to the MoaC family. In terms of assembly, homohexamer; trimer of dimers.

It carries out the reaction (8S)-3',8-cyclo-7,8-dihydroguanosine 5'-triphosphate = cyclic pyranopterin phosphate + diphosphate. It functions in the pathway cofactor biosynthesis; molybdopterin biosynthesis. Functionally, catalyzes the conversion of (8S)-3',8-cyclo-7,8-dihydroguanosine 5'-triphosphate to cyclic pyranopterin monophosphate (cPMP). This chain is Cyclic pyranopterin monophosphate synthase, found in Burkholderia vietnamiensis (strain G4 / LMG 22486) (Burkholderia cepacia (strain R1808)).